The following is a 282-amino-acid chain: Large ribosomal subunit protein uL4c (282 aa).

The N-terminal 49 residues, 1-49 (MASSATAPNSLSFFSSSLFLSSSHQIPKTYISVSKLGSGRVSKPLSVSS), are a transit peptide targeting the chloroplast. The tract at residues 106 to 138 (EVRGGGIKPYSQKKTGHARRGSQRTPLRPGGGV) is disordered.

Belongs to the universal ribosomal protein uL4 family. Part of the 50S ribosomal subunit.

It localises to the plastid. The protein localises to the chloroplast. Functionally, this protein binds directly and specifically to 23S rRNA. May play a role in plastid transcriptional regulation. The chain is Large ribosomal subunit protein uL4c (RPL4) from Arabidopsis thaliana (Mouse-ear cress).